A 220-amino-acid chain; its full sequence is Probable septum site-determining protein MinC (220 aa).

The protein belongs to the MinC family. Interacts with MinD and FtsZ.

Functionally, cell division inhibitor that blocks the formation of polar Z ring septums. Rapidly oscillates between the poles of the cell to destabilize FtsZ filaments that have formed before they mature into polar Z rings. Prevents FtsZ polymerization. The polypeptide is Probable septum site-determining protein MinC (Vibrio vulnificus (strain CMCP6)).